Consider the following 140-residue polypeptide: Ribosome maturation factor RimP (140 aa).

This sequence belongs to the RimP family.

It is found in the cytoplasm. Required for maturation of 30S ribosomal subunits. The chain is Ribosome maturation factor RimP from Campylobacter fetus subsp. fetus (strain 82-40).